We begin with the raw amino-acid sequence, 376 residues long: ORC1-type DNA replication protein 2 (376 aa).

ATP-binding positions include 73–77 (TGKTS), Tyr209, and Arg221.

The protein belongs to the CDC6/cdc18 family.

In terms of biological role, involved in regulation of DNA replication. In Archaeoglobus fulgidus (strain ATCC 49558 / DSM 4304 / JCM 9628 / NBRC 100126 / VC-16), this protein is ORC1-type DNA replication protein 2 (cdc6-2).